The sequence spans 289 residues: Agamous-like MADS-box protein AGL93 (289 aa).

The MADS-box domain maps to 18–78 (QTCFKKSSLS…GKLIKTWPDD (61 aa)). Residues 151-197 (EFGQTRAVSSTTNPLSPPPSLIEDHRHQQRTEPLMSGVSNTEQDLST) form a disordered region. Residues 187–197 (GVSNTEQDLST) are compositionally biased toward polar residues.

In terms of tissue distribution, expressed in pollen.

Its subcellular location is the nucleus. Its function is as follows. Probable transcription factor. The protein is Agamous-like MADS-box protein AGL93 of Arabidopsis thaliana (Mouse-ear cress).